A 468-amino-acid chain; its full sequence is Probable soluble pyridine nucleotide transhydrogenase (468 aa).

33–42 (ERGRMLGGVC) contacts FAD.

This sequence belongs to the class-I pyridine nucleotide-disulfide oxidoreductase family. FAD is required as a cofactor.

The protein localises to the cytoplasm. The enzyme catalyses NAD(+) + NADPH = NADH + NADP(+). In terms of biological role, conversion of NADPH, generated by peripheral catabolic pathways, to NADH, which can enter the respiratory chain for energy generation. This is Probable soluble pyridine nucleotide transhydrogenase (sthA) from Mycobacterium bovis (strain ATCC BAA-935 / AF2122/97).